The primary structure comprises 141 residues: uncharacterized protein (141 aa).

This is an uncharacterized protein from Arabidopsis thaliana (Mouse-ear cress).